Reading from the N-terminus, the 586-residue chain is Clathrin heavy chain linker domain-containing protein 1 (586 aa).

The stretch at 174–232 (MNLDALTKYMKHLEDKYAEIKQAMLIKYVPAQRKADLDEEMIVLLKRRDVAENLNKKLQ) forms a coiled coil.

This chain is Clathrin heavy chain linker domain-containing protein 1 (CLHC1), found in Homo sapiens (Human).